Here is a 252-residue protein sequence, read N- to C-terminus: Iron-sulfur cluster co-chaperone protein HscB homolog (252 aa).

The transit peptide at 1-59 (MKKTKTMVASISTLIRRTYPSTNQCNSLATIQSQTQLPRESLQHHSSAEGRLRFSGRVF) directs the protein to the mitochondrion. One can recognise a J domain in the interval 93 to 165 (DYFQIFGLEK…LSRAMYIMKL (73 aa)).

This sequence belongs to the HscB family. Interacts with ISU1 and HSP70-9/HSCA1.

The protein resides in the mitochondrion. It localises to the cytoplasm. The protein localises to the cytosol. Its function is as follows. Co-chaperone required for the assembly of iron-sulfur [Fe-S] clusters in both mitochondria and cytosol. Required for the activity of iron-sulfur proteins such as aconitase and succinate dehydrogenase. Involved in iron homeostasis and may take part in the control of iron translocation from roots to shoots. In Arabidopsis thaliana (Mouse-ear cress), this protein is Iron-sulfur cluster co-chaperone protein HscB homolog.